Consider the following 190-residue polypeptide: Shikimate kinase (190 aa).

ATP is bound at residue 15 to 20 (GSGKST). Ser19 serves as a coordination point for Mg(2+). 3 residues coordinate substrate: Asp37, Arg61, and Gly83. Residue Arg121 coordinates ATP. A substrate-binding site is contributed by Arg148.

It belongs to the shikimate kinase family. Monomer. Requires Mg(2+) as cofactor.

The protein localises to the cytoplasm. The catalysed reaction is shikimate + ATP = 3-phosphoshikimate + ADP + H(+). It participates in metabolic intermediate biosynthesis; chorismate biosynthesis; chorismate from D-erythrose 4-phosphate and phosphoenolpyruvate: step 5/7. Its function is as follows. Catalyzes the specific phosphorylation of the 3-hydroxyl group of shikimic acid using ATP as a cosubstrate. The chain is Shikimate kinase from Chlorobium chlorochromatii (strain CaD3).